A 316-amino-acid polypeptide reads, in one-letter code: tRNA dimethylallyltransferase (316 aa).

15–22 (GPTASGKS) serves as a coordination point for ATP. A substrate-binding site is contributed by 17-22 (TASGKS). Positions 40–43 (DSRQ) are interaction with substrate tRNA.

Belongs to the IPP transferase family. Monomer. It depends on Mg(2+) as a cofactor.

It carries out the reaction adenosine(37) in tRNA + dimethylallyl diphosphate = N(6)-dimethylallyladenosine(37) in tRNA + diphosphate. Functionally, catalyzes the transfer of a dimethylallyl group onto the adenine at position 37 in tRNAs that read codons beginning with uridine, leading to the formation of N6-(dimethylallyl)adenosine (i(6)A). The sequence is that of tRNA dimethylallyltransferase from Chlorobium limicola (strain DSM 245 / NBRC 103803 / 6330).